A 149-amino-acid polypeptide reads, in one-letter code: Large ribosomal subunit protein bL9 (149 aa).

Belongs to the bacterial ribosomal protein bL9 family.

In terms of biological role, binds to the 23S rRNA. This is Large ribosomal subunit protein bL9 from Helicobacter pylori (strain ATCC 700392 / 26695) (Campylobacter pylori).